A 166-amino-acid polypeptide reads, in one-letter code: Anterior gradient protein 3 (166 aa).

A signal peptide spans 1–21; sequence MMLHSALGLCLLLVTVSSNLA. The Prevents secretion from ER signature appears at 163–166; that stretch reads QSEL.

Belongs to the AGR family. In terms of assembly, interacts with LYPD3 and DAG1 (alphaDAG1). Expressed in the lung, in the ciliated cells of the airway epithelium. Expression increased with differentiation of airway epithelial cells. Not detected in the mucous cells. Expressed in ciliated cells in the oviduct. Also detected in stomach, colon, prostate and liver. Expressed in breast, ovary, prostate and liver cancer. Expression is associated with the level of differentiation of breast cancer (at protein level).

The protein resides in the endoplasmic reticulum. In terms of biological role, required for calcium-mediated regulation of ciliary beat frequency and mucociliary clearance in the airway. Might be involved in the regulation of intracellular calcium in tracheal epithelial cells. The sequence is that of Anterior gradient protein 3 (AGR3) from Homo sapiens (Human).